A 136-amino-acid polypeptide reads, in one-letter code: Galectin-7 (136 aa).

A Galectin domain is found at H6–F136. An a beta-D-galactoside-binding site is contributed by W70 to G76.

Monomer. Mainly expressed in stratified squamous epithelium.

Its subcellular location is the cytoplasm. It is found in the nucleus. The protein resides in the secreted. Its function is as follows. Could be involved in cell-cell and/or cell-matrix interactions necessary for normal growth control. Pro-apoptotic protein that functions intracellularly upstream of JNK activation and cytochrome c release. The chain is Galectin-7 (LGALS7) from Homo sapiens (Human).